We begin with the raw amino-acid sequence, 76 residues long: Conotoxin VnMEKL-021 (76 aa).

Residues 1 to 19 form the signal peptide; that stretch reads MQKLTILLLVAAVLMSTQA. A propeptide spanning residues 20 to 37 is cleaved from the precursor; the sequence is LIKGGGEKRPKEKIKFLS. 3 disulfides stabilise this stretch: cysteine 51–cysteine 65, cysteine 58–cysteine 69, and cysteine 64–cysteine 73.

It belongs to the conotoxin O2 superfamily. Expressed by the venom duct.

It localises to the secreted. This chain is Conotoxin VnMEKL-021, found in Conus ventricosus (Mediterranean cone).